A 51-amino-acid polypeptide reads, in one-letter code: Insulin (51 aa).

3 disulfides stabilise this stretch: Cys7/Cys37, Cys19/Cys50, and Cys36/Cys41.

It belongs to the insulin family. In terms of assembly, heterodimer of a B chain and an A chain linked by two disulfide bonds.

The protein resides in the secreted. In terms of biological role, insulin decreases blood glucose concentration. It increases cell permeability to monosaccharides, amino acids and fatty acids. It accelerates glycolysis, the pentose phosphate cycle, and glycogen synthesis in liver. This is Insulin (INS) from Didelphis virginiana (North American opossum).